The primary structure comprises 521 residues: Forkhead box protein N4 (521 aa).

Positions 197-293 (KPIYSYSCLI…EEMHKWKRKD (97 aa)) form a DNA-binding region, fork-head. The segment at 371–406 (PQAHLAPDSPAPAQTPPLHALPSLSPGPLPQPAMGR) is disordered.

As to expression, mainly expressed in proliferator progenitor cells in brain and retina rather than differentiated cells. In contrast, is expressed only in postmitotic epithelial cells rather than in proliferative progenitors in the proximal airway.

It is found in the nucleus. Functionally, transcription factor essential for neural and some non-neural tissues development, such as retina and lung respectively. Binds to an 11-bp consensus sequence containing the invariant tetranucleotide 5'-ACGC-3'. During development of the central nervous system, is required to specify the amacrine and horizontal cell fates from multipotent retinal progenitors while suppressing the alternative photoreceptor cell fates through activating DLL4-NOTCH signaling. Also acts synergistically with ASCL1/MASH1 to activate DLL4-NOTCH signaling and drive commitment of p2 progenitors to the V2b interneuron fates during spinal cord neurogenesis. In development of non-neural tissues, plays an essential role in the specification of the atrioventricular canal and is indirectly required for patterning the distal airway during lung development. This is Forkhead box protein N4 (Foxn4) from Mus musculus (Mouse).